A 192-amino-acid chain; its full sequence is HTH-type transcriptional repressor SCO4008 (192 aa).

Residues 7 to 67 enclose the HTH tetR-type domain; that stretch reads EATKARIFEA…SVLEKKMLDL (61 aa). The H-T-H motif DNA-binding region spans 30 to 49; sequence RIDRIAAEARANKQLIYAYY.

In terms of assembly, homodimer. Four dimers bind to the two operator sites.

With respect to regulation, binding of a wide range of cationic hydrophobic compounds to SCO4008 causes a decrease in DNA-binding, probably via allosteric conformational change of SCO4008. Its function is as follows. Probably regulates the expression of its own gene and the adjacent SCO4007 gene by binding to two operator sites in the SCO4007-SCO4008 intergenic region. This is HTH-type transcriptional repressor SCO4008 from Streptomyces coelicolor (strain ATCC BAA-471 / A3(2) / M145).